Consider the following 606-residue polypeptide: NADH-ubiquinone oxidoreductase chain 5 (606 aa).

16 helical membrane passes run 1-21 (MNIFPSLMLTSLFTLTLPIIA), 38-58 (NIISFAFIISLIPTMMFIYSG), 87-107 (MIFVPVALFVTWSIMEFSIWY), 114-134 (ITQFFKYLLMFLITMMILVTA), 140-160 (LFIGWEGVGIMSFLLIGWWYG), 171-191 (AILYNRIGDIGFIMSMAWFLS), 213-233 (LMGLLLAATGKSAQFGLHPWL), 241-261 (TPVSALLHSSTMVVAGVFLLI), 273-293 (AQTLTLCLGAITTLFTAICAL), 301-320 (IIAFSTSSQLGLMIVTIGIN), 325-347 (AFLHICTHAFFKAMLFMCSGSII), 366-386 (MPFTATSLIIGSFALTGMPFL), 409-429 (LLMTLIATSLTAAYSTRMIFF), 457-477 (LLIGSIFAGFFISNNIYPTTT), 488-508 (LMALIVTILGFALALELSLAT), and 582-602 (GLIKLYFLSFLITLTLSLLLL).

The protein belongs to the complex I subunit 5 family. Core subunit of respiratory chain NADH dehydrogenase (Complex I) which is composed of 45 different subunits.

Its subcellular location is the mitochondrion inner membrane. The catalysed reaction is a ubiquinone + NADH + 5 H(+)(in) = a ubiquinol + NAD(+) + 4 H(+)(out). Core subunit of the mitochondrial membrane respiratory chain NADH dehydrogenase (Complex I) which catalyzes electron transfer from NADH through the respiratory chain, using ubiquinone as an electron acceptor. Essential for the catalytic activity and assembly of complex I. This chain is NADH-ubiquinone oxidoreductase chain 5 (MT-ND5), found in Rhinoceros unicornis (Greater Indian rhinoceros).